Reading from the N-terminus, the 116-residue chain is uncharacterized protein (116 aa).

2 helical membrane-spanning segments follow: residues 24 to 44 and 70 to 90; these read VPFAAAGGYPISFLFIKVLTA and VILTHFLVPIFFFLFQYIILS.

It is found in the membrane. This is an uncharacterized protein from Saccharomyces cerevisiae (strain ATCC 204508 / S288c) (Baker's yeast).